The following is a 138-amino-acid chain: Large-conductance mechanosensitive channel (138 aa).

Helical transmembrane passes span 19–39 (VGVIIGGAFGAIVTSLVGDII), 40–60 (MPIIGAITGGLDFSNYFIPLA), and 81–101 (GSFLTLTLNFFIVAFVLFMVI).

It belongs to the MscL family. Homopentamer.

The protein localises to the cell inner membrane. Its function is as follows. Channel that opens in response to stretch forces in the membrane lipid bilayer. May participate in the regulation of osmotic pressure changes within the cell. In Bradyrhizobium sp. (strain ORS 278), this protein is Large-conductance mechanosensitive channel.